A 32-amino-acid polypeptide reads, in one-letter code: Periplasmic [NiFe] hydrogenase small subunit (32 aa).

[4Fe-4S] cluster-binding residues include C17 and C20.

It belongs to the [NiFe]/[NiFeSe] hydrogenase small subunit family. Heterodimer of a large and a small subunit. [3Fe-4S] cluster is required as a cofactor. Requires [4Fe-4S] cluster as cofactor.

It localises to the periplasm. The enzyme catalyses 2 Fe(III)-[cytochrome c3] + H2 = 2 Fe(II)-[cytochrome c3] + 2 H(+). The protein is Periplasmic [NiFe] hydrogenase small subunit (hydA) of Desulfovibrio multispirans.